A 90-amino-acid polypeptide reads, in one-letter code: Small ribosomal subunit protein uS15 (90 aa).

The protein belongs to the universal ribosomal protein uS15 family. As to quaternary structure, part of the 30S ribosomal subunit. Forms a bridge to the 50S subunit in the 70S ribosome, contacting the 23S rRNA.

In terms of biological role, one of the primary rRNA binding proteins, it binds directly to 16S rRNA where it helps nucleate assembly of the platform of the 30S subunit by binding and bridging several RNA helices of the 16S rRNA. Its function is as follows. Forms an intersubunit bridge (bridge B4) with the 23S rRNA of the 50S subunit in the ribosome. The chain is Small ribosomal subunit protein uS15 from Aquifex aeolicus (strain VF5).